The following is a 717-amino-acid chain: Polyribonucleotide nucleotidyltransferase (717 aa).

Mg(2+)-binding residues include aspartate 487 and aspartate 493. A KH domain is found at 554–613; sequence PKIITMAINPDKIRDVIGPSGKQINKIIEETGVKIDIEQDGTVFISSINQEMNEKAKKII. An S1 motif domain is found at 623–691; that stretch reads GEIYLGKVKR…KQGRVNLSRK (69 aa).

The protein belongs to the polyribonucleotide nucleotidyltransferase family. Mg(2+) is required as a cofactor.

The protein resides in the cytoplasm. It carries out the reaction RNA(n+1) + phosphate = RNA(n) + a ribonucleoside 5'-diphosphate. Involved in mRNA degradation. Catalyzes the phosphorolysis of single-stranded polyribonucleotides processively in the 3'- to 5'-direction. The polypeptide is Polyribonucleotide nucleotidyltransferase (Bacillus mycoides (strain KBAB4) (Bacillus weihenstephanensis)).